Reading from the N-terminus, the 297-residue chain is N-acetylneuraminate lyase (297 aa).

Aceneuramate-binding residues include serine 47 and threonine 48. The active-site Proton donor is the tyrosine 137. Lysine 165 acts as the Schiff-base intermediate with substrate in catalysis. Aceneuramate is bound by residues threonine 167, glycine 189, aspartate 191, glutamate 192, and serine 208.

This sequence belongs to the DapA family. NanA subfamily. As to quaternary structure, homotetramer.

The protein resides in the cytoplasm. It carries out the reaction aceneuramate = aldehydo-N-acetyl-D-mannosamine + pyruvate. The protein operates within amino-sugar metabolism; N-acetylneuraminate degradation; D-fructose 6-phosphate from N-acetylneuraminate: step 1/5. Catalyzes the reversible aldol cleavage of N-acetylneuraminic acid (sialic acid; Neu5Ac) to form pyruvate and N-acetylmannosamine (ManNAc) via a Schiff base intermediate. The polypeptide is N-acetylneuraminate lyase (Citrobacter koseri (strain ATCC BAA-895 / CDC 4225-83 / SGSC4696)).